The sequence spans 221 residues: GTP cyclohydrolase III (221 aa).

Belongs to the archaeal-type GTP cyclohydrolase family.

The enzyme catalyses GTP + 3 H2O = 2-amino-5-formylamino-6-(5-phospho-D-ribosylamino)pyrimidin-4(3H)-one + 2 phosphate + 2 H(+). In terms of biological role, catalyzes the formation of 2-amino-5-formylamino-6-ribofuranosylamino-4(3H)-pyrimidinone ribonucleotide monophosphate and inorganic phosphate from GTP. Also has an independent pyrophosphate phosphohydrolase activity. This chain is GTP cyclohydrolase III, found in Pyrobaculum aerophilum (strain ATCC 51768 / DSM 7523 / JCM 9630 / CIP 104966 / NBRC 100827 / IM2).